Here is a 475-residue protein sequence, read N- to C-terminus: ATP synthase subunit beta (475 aa).

152–159 is an ATP binding site; the sequence is GGAGVGKT.

This sequence belongs to the ATPase alpha/beta chains family. F-type ATPases have 2 components, CF(1) - the catalytic core - and CF(0) - the membrane proton channel. CF(1) has five subunits: alpha(3), beta(3), gamma(1), delta(1), epsilon(1). CF(0) has three main subunits: a(1), b(2) and c(9-12). The alpha and beta chains form an alternating ring which encloses part of the gamma chain. CF(1) is attached to CF(0) by a central stalk formed by the gamma and epsilon chains, while a peripheral stalk is formed by the delta and b chains.

It localises to the cell membrane. The catalysed reaction is ATP + H2O + 4 H(+)(in) = ADP + phosphate + 5 H(+)(out). Functionally, produces ATP from ADP in the presence of a proton gradient across the membrane. The catalytic sites are hosted primarily by the beta subunits. The protein is ATP synthase subunit beta of Wolbachia pipientis wMel.